Reading from the N-terminus, the 635-residue chain is MNPSPLLDLIDSPQDLRRLDKKQLPRLAGELRTFLLESVGQTGGHFASNLGAVELTIALHYVYDTPEDKLVWDVGHQSYPHKILTGRKNQMHTMRQYGGLAGFPKRCESEYDAFGVGHSSTSIGAALGMAAADKLLGSDRRSVAIIGDGAMTAGQAFEALNCAGDMDVDLLVVLNDNEMSISPNVGALPKYLASNVVRDMHGLLSTVKAQTGKVLDKIPGAMEFAQKVEHKIKTLAEEAEHAKQSLSLFENFGFRYTGPVDGHNVENLVDVLKDLRSRKGPQLLHVITKKGNGYKLAENDPVKYHAVANLPKESAAQMPSENKPAAKPTYTQVFGKWLCDRAAADSRLVAITPAMREGSGLVEFEQRFPDRYFDVGIAEQHAVTFAGGLACEGMKPVVAIYSTFLQRAYDQLVHDIALQNLPVLFAVDRAGIVGADGPTHAGLYDLSFLRCIPNMIVAAPSDENECRLLLSTCYQADAPAAVRYPRGTGTGVPVSDGMETVEIGKGIIRREGEKTAFIAFGSMVAPALAVAEKLNATVADMRFVKPIDEELIVRLARSHDRIVTLEENAEQGGAGGAVLEVLAKHGICKPVLLLGVADTVTGHGDPKKLLDDLGLSAEAVERRVRAWLSDRDAAN.

Thiamine diphosphate-binding positions include histidine 76 and 117-119 (GHS). Aspartate 148 contacts Mg(2+). Thiamine diphosphate is bound by residues 149–150 (GA), asparagine 177, tyrosine 294, and glutamate 379. Asparagine 177 is a binding site for Mg(2+).

It belongs to the transketolase family. DXPS subfamily. As to quaternary structure, homodimer. The cofactor is Mg(2+). Thiamine diphosphate serves as cofactor.

The enzyme catalyses D-glyceraldehyde 3-phosphate + pyruvate + H(+) = 1-deoxy-D-xylulose 5-phosphate + CO2. Its pathway is metabolic intermediate biosynthesis; 1-deoxy-D-xylulose 5-phosphate biosynthesis; 1-deoxy-D-xylulose 5-phosphate from D-glyceraldehyde 3-phosphate and pyruvate: step 1/1. Its function is as follows. Catalyzes the acyloin condensation reaction between C atoms 2 and 3 of pyruvate and glyceraldehyde 3-phosphate to yield 1-deoxy-D-xylulose-5-phosphate (DXP). In Neisseria meningitidis serogroup C (strain 053442), this protein is 1-deoxy-D-xylulose-5-phosphate synthase.